A 351-amino-acid chain; its full sequence is Sesquiterpene synthase 14 (351 aa).

Mg(2+)-binding residues include aspartate 87, asparagine 223, serine 227, and glutamate 231. A DDXXD motif motif is present at residues 87 to 91; sequence DEYTD. An NSE/DTE motif motif is present at residues 223–231; that stretch reads NDIASYNKE. The (2E,6E)-farnesyl diphosphate site is built by arginine 312 and tyrosine 313.

This sequence belongs to the terpene synthase family. It depends on Mg(2+) as a cofactor.

The enzyme catalyses (2E,6E)-farnesyl diphosphate = pentalenene + diphosphate. Functionally, terpene cyclase that catalyzes the cyclization of farnesyl diphosphate (FPP) to pentalenene as a major product, as well as caryophyllene. The chain is Sesquiterpene synthase 14 from Postia placenta (strain ATCC 44394 / Madison 698-R) (Brown rot fungus).